The chain runs to 681 residues: DNA-directed RNA polymerase subunit beta' (681 aa).

Residues Cys-69, Cys-71, Cys-87, and Cys-90 each coordinate Zn(2+). Residues Asp-489, Asp-491, and Asp-493 each contribute to the Mg(2+) site.

This sequence belongs to the RNA polymerase beta' chain family. RpoC1 subfamily. As to quaternary structure, in plastids the minimal PEP RNA polymerase catalytic core is composed of four subunits: alpha, beta, beta', and beta''. When a (nuclear-encoded) sigma factor is associated with the core the holoenzyme is formed, which can initiate transcription. It depends on Mg(2+) as a cofactor. Zn(2+) serves as cofactor.

The protein localises to the plastid. It localises to the chloroplast. The catalysed reaction is RNA(n) + a ribonucleoside 5'-triphosphate = RNA(n+1) + diphosphate. In terms of biological role, DNA-dependent RNA polymerase catalyzes the transcription of DNA into RNA using the four ribonucleoside triphosphates as substrates. The polypeptide is DNA-directed RNA polymerase subunit beta' (Nicotiana tomentosiformis (Tobacco)).